A 122-amino-acid polypeptide reads, in one-letter code: UPF0102 protein XAC0764 (122 aa).

Belongs to the UPF0102 family.

This is UPF0102 protein XAC0764 from Xanthomonas axonopodis pv. citri (strain 306).